The primary structure comprises 348 residues: Phosphate acyltransferase (348 aa).

It belongs to the PlsX family. Homodimer. Probably interacts with PlsY.

The protein localises to the cytoplasm. The enzyme catalyses a fatty acyl-[ACP] + phosphate = an acyl phosphate + holo-[ACP]. Its pathway is lipid metabolism; phospholipid metabolism. Functionally, catalyzes the reversible formation of acyl-phosphate (acyl-PO(4)) from acyl-[acyl-carrier-protein] (acyl-ACP). This enzyme utilizes acyl-ACP as fatty acyl donor, but not acyl-CoA. The polypeptide is Phosphate acyltransferase (Oenococcus oeni (strain ATCC BAA-331 / PSU-1)).